Here is a 531-residue protein sequence, read N- to C-terminus: SWI/SNF-related matrix-associated actin-dependent regulator of chromatin subfamily D member 2 (531 aa).

Asymmetric dimethylarginine occurs at positions 81 and 104. The residue at position 203 (Ser203) is a Phosphoserine. Residues 205–227 form a disordered region; sequence SKAEGDTAGTTGTPGGTPAGDKV. Thr217 carries the phosphothreonine modification. Residue Lys226 forms a Glycyl lysine isopeptide (Lys-Gly) (interchain with G-Cter in SUMO2) linkage. An SWIB/MDM2 domain is found at 306-383; it reads HQPPQYKLDP…PMKLAGLLQH (78 aa).

This sequence belongs to the SMARCD family. As to quaternary structure, component of the multiprotein chromatin-remodeling complexes SWI/SNF: SWI/SNF-A (BAF), SWI/SNF-B (PBAF) and related complexes. The canonical complex contains a catalytic subunit (either SMARCA4/BRG1/BAF190A or SMARCA2/BRM/BAF190B), and at least SMARCE1, ACTL6A/BAF53, SMARCC1/BAF155, SMARCC2/BAF170, and SMARCB1/SNF5/BAF47. Other subunits specific to each of the complexes may also be present permitting several possible combinations developmentally and tissue specific. Component of the BAF complex, which includes at least actin (ACTB), ARID1A/BAF250A, ARID1B/BAF250B, SMARCA2/BRM, SMARCA4/BRG1, ACTL6A/BAF53, ACTL6B/BAF53B, SMARCE1/BAF57, SMARCC1/BAF155, SMARCC2/BAF170, SMARCB1/SNF5/INI1, and one or more SMARCD1/BAF60A, SMARCD2/BAF60B, or SMARCD3/BAF60C. In muscle cells, the BAF complex also contains DPF3. Component of the SWI/SNF-B (PBAF) chromatin remodeling complex, at least composed of SMARCA4/BRG1, SMARCB1/BAF47/SNF5, ACTL6A/BAF53A or ACTL6B/BAF53B, SMARCE1/BAF57, SMARCD1/BAF60A, SMARCD2/BAF60B, perhaps SMARCD3/BAF60C, SMARCC1/BAF155, SMARCC2/BAF170, PBRM1/BAF180, ARID2/BAF200 and actin (ACTB). Interacts with UNKL. Interacts with CEBPE. In terms of processing, ubiquitinated through a signaling process involving RAC1 and the RING finger protein UNKL.

Its subcellular location is the nucleus. Its function is as follows. Involved in transcriptional activation and repression of select genes by chromatin remodeling (alteration of DNA-nucleosome topology). Component of SWI/SNF chromatin remodeling complexes that carry out key enzymatic activities, changing chromatin structure by altering DNA-histone contacts within a nucleosome in an ATP-dependent manner. Critical regulator of myeloid differentiation, controlling granulocytopoiesis and the expression of genes involved in neutrophil granule formation. In Bos taurus (Bovine), this protein is SWI/SNF-related matrix-associated actin-dependent regulator of chromatin subfamily D member 2 (SMARCD2).